A 1938-amino-acid chain; its full sequence is Myosin-13 (1938 aa).

A Myosin N-terminal SH3-like domain is found at Asp33–Pro82. The Myosin motor domain maps to Asp86–Asp782. Lys130 bears the N6,N6,N6-trimethyllysine mark. Gly179 to Thr186 provides a ligand contact to ATP. Actin-binding stretches follow at residues Leu659–Glu681 and Arg761–Gly775. The IQ domain maps to Leu785 to Ser814. The stretch at Leu843–Glu1938 forms a coiled coil. Residues Ala1917–Glu1938 are disordered. Residues Lys1927–Glu1938 show a composition bias toward basic and acidic residues.

Belongs to the TRAFAC class myosin-kinesin ATPase superfamily. Myosin family. As to quaternary structure, muscle myosin is a hexameric protein that consists of 2 heavy chain subunits (MHC), 2 alkali light chain subunits (MLC) and 2 regulatory light chain subunits (MLC-2). Specifically expressed in extraocular and laryngeal muscles.

It is found in the cytoplasm. Its subcellular location is the myofibril. In terms of biological role, fast twitching myosin mediating the high-velocity and low-tension contractions of specific striated muscles. The protein is Myosin-13 (MYH13) of Homo sapiens (Human).